Here is a 354-residue protein sequence, read N- to C-terminus: Glycerol-3-phosphate dehydrogenase [NAD(+)], glycosomal (354 aa).

Residues 15 to 20 (GSGAFG), phenylalanine 90, lysine 118, and alanine 150 contribute to the NAD(+) site. A substrate-binding site is contributed by lysine 118. Lysine 203 (proton acceptor) is an active-site residue. NAD(+) contacts are provided by arginine 267 and glutamate 293. A substrate-binding site is contributed by 267–268 (RN). The Microbody targeting signal signature appears at 352 to 354 (SKM).

Belongs to the NAD-dependent glycerol-3-phosphate dehydrogenase family.

It localises to the glycosome. It carries out the reaction sn-glycerol 3-phosphate + NAD(+) = dihydroxyacetone phosphate + NADH + H(+). The chain is Glycerol-3-phosphate dehydrogenase [NAD(+)], glycosomal (GPD) from Trypanosoma brucei brucei.